Here is a 650-residue protein sequence, read N- to C-terminus: Histone-lysine N-methyltransferase family member SUVH9 (650 aa).

Disordered stretches follow at residues 1-24 (MGSS…KLEP) and 95-129 (PVEE…RSSE). Over residues 7-20 (PLDPSLNPSPSLIP) the composition is skewed to low complexity. Residues 107-118 (YSTSDSSPSVAT) show a composition bias toward polar residues. One can recognise a YDG domain in the interval 205–352 (GSIPGVQVGD…FGVFKYRLER (148 aa)). A Pre-SET domain is found at 432–490 (SGCDCVNGCGSGCLCEAKNSGEIAYDYNGTLIRQKPLIHECGSACQCPPSCRNRVTQKG). 9 residues coordinate Zn(2+): Cys434, Cys436, Cys440, Cys444, Cys446, Cys472, Cys476, Cys478, and Cys482. The SET domain maps to 493 to 637 (NRLEVFRSLE…PMTELSLDYG (145 aa)).

This sequence belongs to the class V-like SAM-binding methyltransferase superfamily. Histone-lysine methyltransferase family. Suvar3-9 subfamily. As to quaternary structure, component of an RNA-directed DNA methylation (RdDM) complex that contains at least MORC6, MORC1/CRT1, MORC2, SWI3D and SUVH9. Interacts directly with MORC6, MORC2 and MORC1/CRT1. Interacts with SWI3B, SWI3C and SWI3D.

The protein resides in the nucleus. The protein localises to the chromosome. Its subcellular location is the centromere. In terms of biological role, histone methyltransferase family member that plays a role in gene silencing. Together with MORC6 and SUVH2, regulates the silencing of some transposable elements (TEs). According to PubMed:19043555, the protein does not bind S-adenosyl-L-methionine and lacks methyltransferase activity. Instead, it may function downstream of DRM2 in RNA-directed DNA methylation, binding to methylated DNA and recruiting DNA-directed RNA polymerase V to chromatin. This is Histone-lysine N-methyltransferase family member SUVH9 (SUVH9) from Arabidopsis thaliana (Mouse-ear cress).